The following is a 387-amino-acid chain: MKILAAMSGGVDSAVAAARAVEAGHDVTGVHLALSRMPGTLRTGSRGCCTIEDSMDARRAADLLGIPFYVWDFSERFAADVVDDFVAEYQAGRTPNPCMRCNERIKFAAVLEKALDLGFDAVCTGHYADVLEGPDGQPELHRAAAWAKDQSYVLGVLTAEQIAHSYFPLGSTPSKAEVRAEAQARGIQVAQKPDSHDICFIPDGDTRGWLADRVGAEPGEILDGEGNAIGTHQGAAAFTVGQRKGLAIGTPAPDGRPRFVLEIRPKDNTVVVGPQEALAIREIAGSSYTWAGTPPTRPDQPFDCDVQIRAHADPVPARAAVSVVDGSVQLVITPRDPLHGVAPGQTAVVYAGTRVLGQVTIDRTVSAVDDARPPMRDAALVGAAAGE.

ATP-binding positions include 6 to 13 (AMSGGVDS) and L32. The active-site Nucleophile is the C101. C101 and C199 are disulfide-bonded. G125 serves as a coordination point for ATP. Residues 148–150 (KDQ) are interaction with tRNA. C199 (cysteine persulfide intermediate) is an active-site residue.

The protein belongs to the MnmA/TRMU family.

The protein localises to the cytoplasm. It catalyses the reaction S-sulfanyl-L-cysteinyl-[protein] + uridine(34) in tRNA + AH2 + ATP = 2-thiouridine(34) in tRNA + L-cysteinyl-[protein] + A + AMP + diphosphate + H(+). Its function is as follows. Catalyzes the 2-thiolation of uridine at the wobble position (U34) of tRNA, leading to the formation of s(2)U34. The chain is tRNA-specific 2-thiouridylase MnmA from Clavibacter michiganensis subsp. michiganensis (strain NCPPB 382).